Consider the following 159-residue polypeptide: Ribosomal RNA large subunit methyltransferase H (159 aa).

S-adenosyl-L-methionine-binding positions include L76, G108, and 127-132 (FGRLTL).

The protein belongs to the RNA methyltransferase RlmH family. In terms of assembly, homodimer.

The protein localises to the cytoplasm. The catalysed reaction is pseudouridine(1915) in 23S rRNA + S-adenosyl-L-methionine = N(3)-methylpseudouridine(1915) in 23S rRNA + S-adenosyl-L-homocysteine + H(+). Functionally, specifically methylates the pseudouridine at position 1915 (m3Psi1915) in 23S rRNA. This chain is Ribosomal RNA large subunit methyltransferase H, found in Listeria welshimeri serovar 6b (strain ATCC 35897 / DSM 20650 / CCUG 15529 / CIP 8149 / NCTC 11857 / SLCC 5334 / V8).